A 1427-amino-acid polypeptide reads, in one-letter code: Multidrug resistance-associated protein 5 (1427 aa).

At 1–147 the chain is on the cytoplasmic side; sequence MPSDSEEVCL…IYRFISTRLW (147 aa). Residues 148–168 form a helical membrane-spanning segment; sequence FSCAVFFFCLIFGFIGPTCFI. One can recognise an ABC transmembrane type-1 1 domain in the interval 151 to 432; sequence AVFFFCLIFG…IPYGSRYLAE (282 aa). At 169-185 the chain is on the extracellular side; sequence RRLIAFAENPERDEQSR. A helical transmembrane segment spans residues 186–206; sequence IVYSYGIALVAAISVVEFARV. At 207 to 268 the chain is on the cytoplasmic side; the sequence is LSYGATWAVS…RLFDAVTFAP (62 aa). The chain crosses the membrane as a helical span at residues 269–289; it reads LVLVGPLVLVGGIGYLLMVIG. Residue Arg-290 is a topological domain, extracellular. The chain crosses the membrane as a helical span at residues 291 to 311; it reads WSLLGILVFFVFDVIQFGLGK. Residues 312-375 lie on the Cytoplasmic side of the membrane; it reads SMVACRNLAI…RKSGYAQSLA (64 aa). Residues 376–396 traverse the membrane as a helical segment; that stretch reads IACGPVVPVVAAILTFVGVVL. At 397–399 the chain is on the extracellular side; it reads AGN. Residues 400 to 420 form a helical membrane-spanning segment; it reads DLLASDAFSAITVYFVMLFGI. The Cytoplasmic segment spans residues 421–770; it reads RMIPYGSRYL…TIAWRIYKQY (350 aa). One can recognise an ABC transporter 1 domain in the interval 486 to 707; that stretch reads PTENEVIVVE…NDAYKTFVDA (222 aa). Position 518-525 (518-525) interacts with ATP; sequence GAVGCGKS. Residues 771 to 791 traverse the membrane as a helical segment; sequence IHAAGGWPIWTCLVIGFIVNV. In terms of domain architecture, ABC transmembrane type-1 2 spans 783 to 1078; that stretch reads LVIGFIVNVV…AVRTQTELEA (296 aa). At 792–833 the chain is on the extracellular side; it reads VSNIFSTYWLSRWLKKGHDETTTITNGTEFLEMKTSLADSPV. Asn-817 carries N-linked (GlcNAc...) asparagine glycosylation. A helical transmembrane segment spans residues 834–854; sequence TGFYAAVYLVALVVLTISGLF. Residues 855-909 lie on the Cytoplasmic side of the membrane; sequence KACVFVKVSLTAATRLHDRMFQAVIHGATSFFDSTPTGRILNRFSKDMDEIDVKL. The helical transmembrane segment at 910-930 threads the bilayer; the sequence is PFTAEVFLQNMITCLGFLVVI. A topological domain (extracellular) is located at residue Thr-931. The chain crosses the membrane as a helical span at residues 932 to 952; sequence SVFPYFLLFAIPLFVVFVVFV. Residues 953-1022 lie on the Cytoplasmic side of the membrane; the sequence is SCFRAGIRNL…MFQSAMRWLA (70 aa). The helical transmembrane segment at 1023-1043 threads the bilayer; that stretch reads VWLDLLVVVMTAIVALLTVML. The Extracellular segment spans residues 1044 to 1049; sequence TGTVSP. The chain crosses the membrane as a helical span at residues 1050–1070; sequence ADAGMAIAFAVQMSGIFQFAV. The Cytoplasmic segment spans residues 1071-1427; the sequence is RTQTELEAKM…SSDTDIEVVQ (357 aa). The region spanning 1117 to 1351 is the ABC transporter 2 domain; sequence INFSEVNLRY…DWSVYKLEDK (235 aa). 1151-1158 contributes to the ATP binding site; that stretch reads GRTGSGKS. The tract at residues 1361–1427 is disordered; sequence VGENSEHSME…SSDTDIEVVQ (67 aa). Basic and acidic residues predominate over residues 1382–1418; sequence DIVKVENEQKDSSDDVVHIESGDDDVKADSSEVKETS.

Belongs to the ABC transporter superfamily. ABCC family. Conjugate transporter (TC 3.A.1.208) subfamily. In terms of tissue distribution, highly expressed in the intestine and pharynx. Expressed at low levels in the hypodermis and in some neurons.

The protein resides in the basolateral cell membrane. Functionally, heme transporter required for the export of intestinal heme to different tissues and subcellular compartments. Also, required for the export of vitamin B12 from the intestine of the mother to the embryo to support embryonic development. This is Multidrug resistance-associated protein 5 from Caenorhabditis elegans.